The primary structure comprises 217 residues: UPF0323 lipoprotein HPP12_0232 (217 aa).

The signal sequence occupies residues 1-27; sequence MKKPYRKISDYAIVGGLSALVMVSIVG. Cys-28 is lipidated: N-palmitoyl cysteine. Cys-28 carries S-diacylglycerol cysteine lipidation. The segment covering 160–171 has biased composition (polar residues); sequence QRTYKSPQAYQR. Residues 160-217 are disordered; that stretch reads QRTYKSPQAYQRSQNSFSKSAPSASSMGTASKGQSGFFGSSRPTSSPAISSGTRGFNS. Over residues 172–185 the composition is skewed to low complexity; it reads SQNSFSKSAPSASS. Polar residues predominate over residues 186 to 197; it reads MGTASKGQSGFF. Over residues 199–210 the composition is skewed to low complexity; the sequence is SSRPTSSPAISS.

It belongs to the UPF0323 family.

The protein localises to the cell membrane. This is UPF0323 lipoprotein HPP12_0232 from Helicobacter pylori (strain P12).